The primary structure comprises 448 residues: Asparagine--tRNA ligase (448 aa).

It belongs to the class-II aminoacyl-tRNA synthetase family. Homodimer.

It localises to the cytoplasm. It carries out the reaction tRNA(Asn) + L-asparagine + ATP = L-asparaginyl-tRNA(Asn) + AMP + diphosphate + H(+). In Streptococcus pyogenes serotype M2 (strain MGAS10270), this protein is Asparagine--tRNA ligase.